The chain runs to 179 residues: DELTA-actitoxin-Afr1c (179 aa).

The segment at 1-29 (SAEVAGAIIDGASLTFDVLQTVLKALGDV) is N-terminal alpha-helix that contributes to the pore. Residues 11-30 (GASLTFDVLQTVLKALGDVS) form an N-terminal region region. R31 is a binding site for an N-(acyl)-sphingosylphosphocholine. Residues Y51 and R53 each coordinate N-acetyl-D-glucosamine 6-sulfate. Residues R53, S54, R79, G85, Y113, S114, W116, Y133, Y137, Y138, R144, and G168 each coordinate an N-(acyl)-sphingosylphosphocholine. A trp-rich region, which is important for the binding to lipid membrane region spans residues 105 to 120 (SIPFDYNLYSNWWNVK). Residue Y138 coordinates N-acetyl-D-glucosamine 6-sulfate. The short motif at 144 to 146 (RGD) is the Cell attachment site, crucial for protein stability element.

Belongs to the actinoporin family. Sea anemone subfamily. In terms of assembly, octamer or nonamer in membranes. Monomer in the soluble state.

The protein resides in the secreted. The protein localises to the nematocyst. Its subcellular location is the target cell membrane. Functionally, pore-forming toxin (PFT) that consists of a crown-shaped octamer or nonamer that forms cation-selective hydrophilic pores of about 1.5 nm (inside) and 13 nm (outside) and causes cytolysis. It causes cardiac stimulation. Also causes hemolysis (HC(50)=0.3 nM). Interestingly, the Phe-16 is crucial for hemolysis. Pore formation is a multi-step process that involves specific recognition of membrane sphingomyelin (but neither cholesterol nor phosphatidylcholine) using aromatic rich region and adjacent phosphocholine (POC) binding site, firm binding to the membrane (mainly driven by hydrophobic interactions) accompanied by the transfer of the N-terminal region to the lipid-water interface and finally pore formation after oligomerization of monomers. It is probable that a dimeric form is an assembly intermediate before the complete oligomerization. The formation of stable pores occurs only in vesicles composed of DOPC/SM (there is no oligomerization when the PFT is treated with vesicles of DOPC or SM alone). The transmembrane pore displays 8 lateral perforations, one at each subunit-subunit interface, partially occupied by the acyl-chain region of a bridging lipid. Each pore contains 24 lipid molecules, firmly bound to each subunit, that is, 3 lipids (L1, L2, L3, L4 and/or L5) are associated to each subunit. Lipid L1 bridges 2 subunits, whereas lipids L2 and L3 bind to sites at single subunit. In Actinia fragacea (Strawberry anemone), this protein is DELTA-actitoxin-Afr1c.